The following is a 334-amino-acid chain: Probable fructose-bisphosphate aldolase class 1 (334 aa).

The protein belongs to the class I fructose-bisphosphate aldolase family.

It carries out the reaction beta-D-fructose 1,6-bisphosphate = D-glyceraldehyde 3-phosphate + dihydroxyacetone phosphate. The protein operates within carbohydrate degradation; glycolysis; D-glyceraldehyde 3-phosphate and glycerone phosphate from D-glucose: step 4/4. This chain is Probable fructose-bisphosphate aldolase class 1, found in Xylella fastidiosa (strain Temecula1 / ATCC 700964).